A 357-amino-acid chain; its full sequence is tRNA/tmRNA (uracil-C(5))-methyltransferase (357 aa).

Glutamine 180, tyrosine 209, asparagine 214, glutamate 230, and aspartate 290 together coordinate S-adenosyl-L-methionine. The Nucleophile role is filled by cysteine 315. Residue glutamate 349 is the Proton acceptor of the active site.

This sequence belongs to the class I-like SAM-binding methyltransferase superfamily. RNA M5U methyltransferase family. TrmA subfamily.

It carries out the reaction uridine(54) in tRNA + S-adenosyl-L-methionine = 5-methyluridine(54) in tRNA + S-adenosyl-L-homocysteine + H(+). The enzyme catalyses uridine(341) in tmRNA + S-adenosyl-L-methionine = 5-methyluridine(341) in tmRNA + S-adenosyl-L-homocysteine + H(+). Dual-specificity methyltransferase that catalyzes the formation of 5-methyluridine at position 54 (m5U54) in all tRNAs, and that of position 341 (m5U341) in tmRNA (transfer-mRNA). The polypeptide is tRNA/tmRNA (uracil-C(5))-methyltransferase (Campylobacter jejuni subsp. jejuni serotype O:2 (strain ATCC 700819 / NCTC 11168)).